A 424-amino-acid chain; its full sequence is S-adenosylmethionine synthase (424 aa).

Position 14 (His-14) interacts with ATP. Asp-16 contacts Mg(2+). Glu-42 provides a ligand contact to K(+). L-methionine is bound by residues Glu-55 and Gln-98. The interval 98-108 (QSNDISRGIER) is flexible loop. ATP contacts are provided by residues 165–167 (DAK), 242–243 (KF), Asp-251, 257–258 (RK), Ala-274, and Lys-278. Asp-251 lines the L-methionine pocket. L-methionine is bound at residue Lys-282.

The protein belongs to the AdoMet synthase family. In terms of assembly, homotetramer; dimer of dimers. Requires Mg(2+) as cofactor. K(+) is required as a cofactor.

Its subcellular location is the cytoplasm. It catalyses the reaction L-methionine + ATP + H2O = S-adenosyl-L-methionine + phosphate + diphosphate. It functions in the pathway amino-acid biosynthesis; S-adenosyl-L-methionine biosynthesis; S-adenosyl-L-methionine from L-methionine: step 1/1. In terms of biological role, catalyzes the formation of S-adenosylmethionine (AdoMet) from methionine and ATP. The overall synthetic reaction is composed of two sequential steps, AdoMet formation and the subsequent tripolyphosphate hydrolysis which occurs prior to release of AdoMet from the enzyme. The polypeptide is S-adenosylmethionine synthase (Azobacteroides pseudotrichonymphae genomovar. CFP2).